Here is a 313-residue protein sequence, read N- to C-terminus: D-apiose import binding protein (313 aa).

A signal peptide spans 1 to 26 (MKLTRRLTLAAFASVLALGTAAPAFS). D-apiofuranose contacts are provided by residues Asn-39, 115–116 (DR), 162–164 (DTN), Arg-168, Asn-218, Asp-243, and Gln-263.

The protein belongs to the bacterial solute-binding protein 2 family.

It is found in the periplasm. Part of an ABC transporter complex involved in D-apiose import. The protein is D-apiose import binding protein of Rhizobium rhizogenes (strain K84 / ATCC BAA-868) (Agrobacterium radiobacter).